The following is a 415-amino-acid chain: L-threonine dehydratase biosynthetic IlvA (415 aa).

Lys53 bears the N6-(pyridoxal phosphate)lysine mark. Residues Asn80, 183 to 187 (GGGGL), and Ser308 each bind pyridoxal 5'-phosphate. The ACT-like domain occupies 332-406 (HYFIIQFPQR…KGFEYREINK (75 aa)).

Belongs to the serine/threonine dehydratase family. As to quaternary structure, homotetramer. It depends on pyridoxal 5'-phosphate as a cofactor.

It catalyses the reaction L-threonine = 2-oxobutanoate + NH4(+). Its pathway is amino-acid biosynthesis; L-isoleucine biosynthesis; 2-oxobutanoate from L-threonine: step 1/1. Functionally, catalyzes the anaerobic formation of alpha-ketobutyrate and ammonia from threonine in a two-step reaction. The first step involved a dehydration of threonine and a production of enamine intermediates (aminocrotonate), which tautomerizes to its imine form (iminobutyrate). Both intermediates are unstable and short-lived. The second step is the nonenzymatic hydrolysis of the enamine/imine intermediates to form 2-ketobutyrate and free ammonia. In the low water environment of the cell, the second step is accelerated by RidA. This is L-threonine dehydratase biosynthetic IlvA (ilvA) from Halalkalibacterium halodurans (strain ATCC BAA-125 / DSM 18197 / FERM 7344 / JCM 9153 / C-125) (Bacillus halodurans).